We begin with the raw amino-acid sequence, 1450 residues long: DNA-directed RNA polymerase RPB1 homolog (1450 aa).

Belongs to the RNA polymerase beta' chain family. In terms of assembly, part of the viral DNA-directed RNA polymerase that consists of 8 polII-like subunits (RPB1, RPB2, RPB3, RPB5, RPB6, RPB7, RPB9, RPB10), a capping enzyme and a termination factor.

Its subcellular location is the virion. It carries out the reaction RNA(n) + a ribonucleoside 5'-triphosphate = RNA(n+1) + diphosphate. Catalytic component of the DNA-directed RNA polymerase (RNAP) that catalyzes the transcription in the cytoplasm of viral DNA into RNA using the four ribonucleoside triphosphates as substrates. Forms the polymerase active center together with RPB2. Part of the core element with the central large cleft, the clamp element that moves to open and close the cleft and the jaws that are thought to grab the incoming DNA template. This chain is DNA-directed RNA polymerase RPB1 homolog, found in African swine fever virus (strain Badajoz 1971 Vero-adapted) (Ba71V).